The sequence spans 1162 residues: Integrin alpha-L (1162 aa).

The signal sequence occupies residues 1–23 (MSFRIAGPRLLLLGLQLFAKAWS). At 24 to 1088 (YNLDTRPTQS…DLIHEKEMLH (1065 aa)) the chain is on the extracellular side. FG-GAP repeat units lie at residues 28 to 79 (TRPT…FCQP) and 80 to 138 (VSLH…GPML). Residues C70 and C77 are joined by a disulfide bond. N86 is a glycosylation site (N-linked (GlcNAc...) asparagine). Intrachain disulfides connect C108/C126 and C147/C199. Residues 153–325 (DLVFLFDGSQ…EKLKDLFTDL (173 aa)) enclose the VWFA domain. N-linked (GlcNAc...) asparagine glycosylation is found at N185 and N270. FG-GAP repeat units follow at residues 336-387 (NRQD…GATF), 390-443 (QEPL…GGRW), 444-504 (NQTQ…LFEM), 505-561 (VSEL…GLSP), and 565-625 (QRIQ…FSPE). Residue N444 is glycosylated (N-linked (GlcNAc...) asparagine). D466, D468, D470, E474, D528, N530, D532, D536, D588, D592, and D596 together coordinate Ca(2+). A disulfide bridge connects residues C651 and C705. N-linked (GlcNAc...) asparagine glycans are attached at residues N668, N696, N724, and N728. An intrachain disulfide couples C768 to C774. A glycan (N-linked (GlcNAc...) asparagine) is linked at N777. A disulfide bond links C841 and C857. N858, N881, N891, N900, and N928 each carry an N-linked (GlcNAc...) asparagine glycan. Disulfide bonds link C994–C1010 and C1018–C1049. N1057 carries an N-linked (GlcNAc...) asparagine glycan. Residues 1089 to 1109 (VYVLSGIGGLVLLFLIFLALY) traverse the membrane as a helical segment. The Cytoplasmic portion of the chain corresponds to 1110–1162 (KVGFFKRNLKEKMEADGGVPNGSPPEDTDPLAVPGEETKDMGCLEPLRESDKD). The GFFKR motif motif lies at 1112–1116 (GFFKR). A disordered region spans residues 1124-1162 (ADGGVPNGSPPEDTDPLAVPGEETKDMGCLEPLRESDKD). Residues 1145–1162 (EETKDMGCLEPLRESDKD) are compositionally biased toward basic and acidic residues.

Belongs to the integrin alpha chain family. Heterodimer of an alpha and a beta subunit. The ITGAL alpha subunit associates with the ITGB2 beta subunit. Interacts with THBD. Interacts with CD226. In terms of processing, in resting T-cells, up to 40% of surface ITGAL is constitutively phosphorylated. Phosphorylation causes conformational changes needed for ligand binding and is necessary for the activation by some physiological agents. Leukocytes.

The protein localises to the cell membrane. Integrin ITGAL/ITGB2 is a receptor for ICAM1, ICAM2, ICAM3 and ICAM4. Integrin ITGAL/ITGB2 is a receptor for F11R. Integrin ITGAL/ITGB2 is a receptor for the secreted form of ubiquitin-like protein ISG15; the interaction is mediated by ITGAL. Involved in a variety of immune phenomena including leukocyte-endothelial cell interaction, cytotoxic T-cell mediated killing, and antibody dependent killing by granulocytes and monocytes. Contributes to natural killer cell cytotoxicity. Involved in leukocyte adhesion and transmigration of leukocytes including T-cells and neutrophils. Acts as a platform at the immunological synapse to translate TCR engagement and density of the ITGAL ligand ICAM1 into graded adhesion. Required for generation of common lymphoid progenitor cells in bone marrow, indicating the role in lymphopoiesis. Integrin ITGAL/ITGB2 in association with ICAM3, contributes to apoptotic neutrophil phagocytosis by macrophages. In Mus musculus (Mouse), this protein is Integrin alpha-L.